The chain runs to 367 residues: 2-aminoethylphosphonate--pyruvate transaminase (367 aa).

Lysine 194 carries the N6-(pyridoxal phosphate)lysine modification.

It belongs to the class-V pyridoxal-phosphate-dependent aminotransferase family. PhnW subfamily. As to quaternary structure, homodimer. Requires pyridoxal 5'-phosphate as cofactor.

The catalysed reaction is (2-aminoethyl)phosphonate + pyruvate = phosphonoacetaldehyde + L-alanine. Functionally, involved in phosphonate degradation. This Klebsiella pneumoniae subsp. pneumoniae (strain ATCC 700721 / MGH 78578) protein is 2-aminoethylphosphonate--pyruvate transaminase.